A 274-amino-acid chain; its full sequence is Nitrogenase iron protein (274 aa).

8 to 15 (GKGGIGKS) provides a ligand contact to ATP. Cys94 is a binding site for [4Fe-4S] cluster. Arg97 is subject to ADP-ribosylarginine; by dinitrogenase reductase ADP-ribosyltransferase. Cys131 serves as a coordination point for [4Fe-4S] cluster.

This sequence belongs to the NifH/BchL/ChlL family. As to quaternary structure, homodimer. Requires [4Fe-4S] cluster as cofactor. In terms of processing, the reversible ADP-ribosylation of Arg-97 inactivates the nitrogenase reductase and regulates nitrogenase activity.

It catalyses the reaction N2 + 8 reduced [2Fe-2S]-[ferredoxin] + 16 ATP + 16 H2O = H2 + 8 oxidized [2Fe-2S]-[ferredoxin] + 2 NH4(+) + 16 ADP + 16 phosphate + 6 H(+). Its function is as follows. The key enzymatic reactions in nitrogen fixation are catalyzed by the nitrogenase complex, which has 2 components: the iron protein and the molybdenum-iron protein. This is Nitrogenase iron protein from Pelodictyon phaeoclathratiforme (strain DSM 5477 / BU-1).